A 436-amino-acid polypeptide reads, in one-letter code: MEHLDVGPLKAARGTVKLPGSKSISNRVLLLAALAEGETVVRDLLDSDDTRVMLAALDTLGVRCEPLGTANAYRVTGTGGRFPAKSADLFMGNAGTAIRPLTAALALQGGEYTLHGVPRMHERPIGDLVDGLRQVGARIDYTGNEGFPPLAIRAASIRIDAPIRVRGDVSSQFLTALLMALPLVEGSGRPVTIEVVGELISKPYIEITLNLMARFGVQVERNGWASFSVPTGVAYRAPGEIFVEGDASSASYFLAAGALGGGPVRVEGVGMSSIQGDVRFADALNRMGANVMAGDNWIEVRGVERDDGKLHALELDCNHIPDAAMTLAVAALFADGTTTLTNIGSWRVKETDRLTAMATELRKLGAAVEEGTDYIRVTPPSHWTAPAGGIDTYDDHRMAMAFSLAAFGPVPVRINDPRCVAKTFPEYFTAFGGIAA.

3-phosphoshikimate-binding residues include K22, S23, and R27. Residue K22 participates in phosphoenolpyruvate binding. Phosphoenolpyruvate-binding residues include G95 and R123. S170, S171, Q172, S201, D322, and K349 together coordinate 3-phosphoshikimate. Residue Q172 coordinates phosphoenolpyruvate. D322 acts as the Proton acceptor in catalysis. Positions 353, 397, and 422 each coordinate phosphoenolpyruvate.

This sequence belongs to the EPSP synthase family. In terms of assembly, monomer.

It is found in the cytoplasm. It catalyses the reaction 3-phosphoshikimate + phosphoenolpyruvate = 5-O-(1-carboxyvinyl)-3-phosphoshikimate + phosphate. It participates in metabolic intermediate biosynthesis; chorismate biosynthesis; chorismate from D-erythrose 4-phosphate and phosphoenolpyruvate: step 6/7. Its function is as follows. Catalyzes the transfer of the enolpyruvyl moiety of phosphoenolpyruvate (PEP) to the 5-hydroxyl of shikimate-3-phosphate (S3P) to produce enolpyruvyl shikimate-3-phosphate and inorganic phosphate. In Ralstonia nicotianae (strain ATCC BAA-1114 / GMI1000) (Ralstonia solanacearum), this protein is 3-phosphoshikimate 1-carboxyvinyltransferase.